The chain runs to 203 residues: Glycerol-3-phosphate acyltransferase (203 aa).

Helical transmembrane passes span 1–21 (MIQT…LGAI), 84–104 (WLQV…VWLG), 117–137 (IFLG…MAVI), and 157–179 (LMLL…LMVL).

This sequence belongs to the PlsY family. Probably interacts with PlsX.

It localises to the cell inner membrane. It carries out the reaction an acyl phosphate + sn-glycerol 3-phosphate = a 1-acyl-sn-glycero-3-phosphate + phosphate. It functions in the pathway lipid metabolism; phospholipid metabolism. Catalyzes the transfer of an acyl group from acyl-phosphate (acyl-PO(4)) to glycerol-3-phosphate (G3P) to form lysophosphatidic acid (LPA). This enzyme utilizes acyl-phosphate as fatty acyl donor, but not acyl-CoA or acyl-ACP. The polypeptide is Glycerol-3-phosphate acyltransferase (Synechococcus sp. (strain CC9605)).